The sequence spans 189 residues: Large ribosomal subunit protein bL9 (189 aa).

It belongs to the bacterial ribosomal protein bL9 family.

Functionally, binds to the 23S rRNA. The polypeptide is Large ribosomal subunit protein bL9 (Beijerinckia indica subsp. indica (strain ATCC 9039 / DSM 1715 / NCIMB 8712)).